Here is a 181-residue protein sequence, read N- to C-terminus: UPF0398 protein LMHCC_0668 (181 aa).

This sequence belongs to the UPF0398 family.

The protein is UPF0398 protein LMHCC_0668 of Listeria monocytogenes serotype 4a (strain HCC23).